Consider the following 193-residue polypeptide: Non-specific lipid transfer protein GPI-anchored 2 (193 aa).

Residues 1–22 (MSNVVVIAVVLIVASLTGHVSA) form the signal peptide. 4 disulfide bridges follow: Cys38/Cys83, Cys48/Cys67, Cys68/Cys110, and Cys81/Cys120. The N-linked (GlcNAc...) asparagine glycan is linked to Asn44. A disordered region spans residues 143–164 (APGSMSGAESPGGFGSGPSASR). A lipid anchor (GPI-anchor amidated glycine) is attached at Gly165. Positions 166 to 193 (SDAPSSAPYSLFLNLIIFPLAFAFYIFC) are cleaved as a propeptide — removed in mature form.

It belongs to the plant LTP family. Post-translationally, O-glycosylated on hydroxyprolines; noncontiguous hydroxylproline residues are glycosylated with arabinogalactan. Up-regulated in the epidermis of top stems. Expressed in roots, cotyledons, seedlings, leaves, stems, buds, flower and silique walls. Preferentially expressed in the shoot apical meristem and the root meristem. Also detected in expanding leaves and petals, developing flowers, and elongating pistils, stamens and siliques.

It is found in the cell membrane. Lipid transfer protein that, together with LTPG1, binds to lipids and functions as a component of the cuticular lipid export machinery that performs extensive export of intracellular lipids (e.g. C29 alkane) from epidermal cells to the surface to build the cuticular wax layer and silique walls. Contributes to pre-invasive defense against some non-host powdery mildew pathogens by preventing the penetration of the epidermal cell wall by the fungal agents (e.g. Blumeria graminis f. sp. hordei (Bgh)). Involved in seed and ovule maturation and development, probably by regulating the fatty acids homeostasis during suberin and sporopollenin biosynthesis or deposition. This Arabidopsis thaliana (Mouse-ear cress) protein is Non-specific lipid transfer protein GPI-anchored 2.